Consider the following 252-residue polypeptide: Auxin-induced in root cultures protein 12 (252 aa).

The signal sequence occupies residues 1–25; sequence MASSSSSLLILAVACFVSLISPAIS. Residues 49-165 form the DOMON domain; it reads LNSYLHYTYN…DSVNQVWQIG (117 aa). Asn-58 and Asn-61 each carry an N-linked (GlcNAc...) asparagine glycan. Met-91 contributes to the heme binding site. Residues Asn-114 and Asn-167 are each glycosylated (N-linked (GlcNAc...) asparagine). His-176 contributes to the heme binding site. Positions 193–224 are disordered; sequence EDAAPGSAPSPGSAPAPGTSGSTTPGTAAGGP. The span at 195–219 shows a compositional bias: low complexity; it reads AAPGSAPSPGSAPAPGTSGSTTPGT. Residue Asn-226 is the site of GPI-anchor amidated asparagine attachment. A propeptide spans 227-252 (removed in mature form); that stretch reads AGSLTRNVNFGVNLGILVLLGSIFIF.

Heme serves as cofactor.

The protein resides in the cell membrane. Functionally, one-heme-containing cytochrome. The chain is Auxin-induced in root cultures protein 12 (AIR12) from Arabidopsis thaliana (Mouse-ear cress).